Here is a 60-residue protein sequence, read N- to C-terminus: Large ribosomal subunit protein bL32 (60 aa).

Positions 1–60 are disordered; sequence MAVQQNKKTPSKRGMHRSHDFLVAPQLSVEPTTGETHMRHHISPNGFYRGRKVLKTKNDE. Over residues 49-60 the composition is skewed to basic residues; it reads RGRKVLKTKNDE.

Belongs to the bacterial ribosomal protein bL32 family.

The sequence is that of Large ribosomal subunit protein bL32 from Janthinobacterium sp. (strain Marseille) (Minibacterium massiliensis).